The sequence spans 705 residues: Methionine--tRNA ligase (705 aa).

Residues 17–27 carry the 'HIGH' region motif; the sequence is PYANGPVHLGH. The Zn(2+) site is built by cysteine 149, cysteine 152, cysteine 162, and cysteine 165. A 'KMSKS' region motif is present at residues 347–351; sequence KFSKS. ATP is bound at residue lysine 350. Residues 604–705 enclose the tRNA-binding domain; sequence EFQKVDLRVA…GEGINGQSVQ (102 aa).

The protein belongs to the class-I aminoacyl-tRNA synthetase family. MetG type 1 subfamily. Homodimer. The cofactor is Zn(2+).

Its subcellular location is the cytoplasm. It carries out the reaction tRNA(Met) + L-methionine + ATP = L-methionyl-tRNA(Met) + AMP + diphosphate. In terms of biological role, is required not only for elongation of protein synthesis but also for the initiation of all mRNA translation through initiator tRNA(fMet) aminoacylation. This chain is Methionine--tRNA ligase, found in Chlorobium chlorochromatii (strain CaD3).